A 133-amino-acid chain; its full sequence is Interleukin-5 (133 aa).

The N-terminal stretch at 1–20 (MRRMLLHLSVLTLSCVWATA) is a signal peptide. Residues Asn-46, Asn-75, and Asn-89 are each glycosylated (N-linked (GlcNAc...) asparagine).

The protein belongs to the IL-5 family. Homodimer; disulfide-linked. Interacts with IL5RA. Interacts with CSF2RB. Expressed in lymphoid cells, including spleen, thymus, lymph nodes and peripheral blood mononuclear cells.

The protein resides in the secreted. Functionally, homodimeric cytokine expressed predominantly by T-lymphocytes and NK cells that plays an important role in the survival, differentiation, and chemotaxis of eosinophils. Also acts on activated and resting B-cells to induce immunoglobulin production, growth, and differentiation. Mechanistically, exerts its biological effects through a receptor composed of IL5RA subunit and the cytokine receptor common subunit beta/CSF2RB. Binding to the receptor leads to activation of various kinases including LYN, SYK and JAK2 and thereby propagates signals through the RAS-MAPK and JAK-STAT5 pathways respectively. The chain is Interleukin-5 (Il5) from Mus musculus (Mouse).